The chain runs to 514 residues: 2,3-bisphosphoglycerate-independent phosphoglycerate mutase (514 aa).

Asp14 and Ser64 together coordinate Mn(2+). Ser64 functions as the Phosphoserine intermediate in the catalytic mechanism. Substrate contacts are provided by residues His125, 155-156 (RD), Arg187, Arg193, 263-266 (RADR), and Lys336. Positions 403, 407, 444, 445, and 463 each coordinate Mn(2+).

This sequence belongs to the BPG-independent phosphoglycerate mutase family. As to quaternary structure, monomer. It depends on Mn(2+) as a cofactor.

The catalysed reaction is (2R)-2-phosphoglycerate = (2R)-3-phosphoglycerate. Its pathway is carbohydrate degradation; glycolysis; pyruvate from D-glyceraldehyde 3-phosphate: step 3/5. Its function is as follows. Catalyzes the interconversion of 2-phosphoglycerate and 3-phosphoglycerate. This chain is 2,3-bisphosphoglycerate-independent phosphoglycerate mutase, found in Shewanella sp. (strain MR-7).